The sequence spans 146 residues: 3-dehydroquinate dehydratase (146 aa).

Tyrosine 24 functions as the Proton acceptor in the catalytic mechanism. Substrate-binding residues include asparagine 73, histidine 79, and aspartate 86. The Proton donor role is filled by histidine 99. Residues 100-101 (LS) and arginine 110 each bind substrate.

This sequence belongs to the type-II 3-dehydroquinase family. In terms of assembly, homododecamer.

The enzyme catalyses 3-dehydroquinate = 3-dehydroshikimate + H2O. It functions in the pathway metabolic intermediate biosynthesis; chorismate biosynthesis; chorismate from D-erythrose 4-phosphate and phosphoenolpyruvate: step 3/7. Functionally, catalyzes a trans-dehydration via an enolate intermediate. The sequence is that of 3-dehydroquinate dehydratase from Shewanella oneidensis (strain ATCC 700550 / JCM 31522 / CIP 106686 / LMG 19005 / NCIMB 14063 / MR-1).